The sequence spans 382 residues: MPRSPRRWTPEEDRVLLDKVKQLFSDGAKNDTTISWATVANALPDRNNKDCRKRWSKITGAKKGSWSLSEDEQLLEGVQKYGRQWAMVAKGVETRSADQCAKRWQHCLDPSLDRSEWRSDQDARLVAAVRRYGTNWKDIKKFEFPKRSTTNLKNRHITLFRQRNKAPGACPGSTETLGPGIDWWSMEQGMIDDMSMDASEDGDDAEDDQTPDSYTSISTSSFDDILGGSSSSPSAADTMTTASPDPYQYLLDWAVPSHADLVQAATSYYPSLDGFLGSTYDHNAKIDSSLGRDANGGNFIPGFPTQTPSQFESIDVSQISDGIVSGEPSRQGASRECRAASNVSSGPQMTLTIDNPDPQTMTGILEVLAKANSKVTISMNRE.

Myb-like domains lie at 1–57, 58–108, and 109–160; these read MPRS…RWSK, ITGA…QHCL, and DPSL…ITLF. Residues 194–210 show a composition bias toward acidic residues; that stretch reads MSMDASEDGDDAEDDQT. The tract at residues 194-240 is disordered; that stretch reads MSMDASEDGDDAEDDQTPDSYTSISTSSFDDILGGSSSSPSAADTMT. A compositionally biased stretch (polar residues) spans 211-240; sequence PDSYTSISTSSFDDILGGSSSSPSAADTMT.

Its subcellular location is the nucleus. Transcription factor; part of the gene cluster that mediates the biosynthesis of 1233A, a natural compound known as an inhibitor of HMG-CoA synthase in the mevalonate pathway and with antibacterial and antifungal activities. Involved in hygromycin B-induced transcriptional control of the cluster. This chain is Myb-like transcription factor, found in Fusarium sp.